Reading from the N-terminus, the 247-residue chain is Probable transcriptional regulatory protein LPC_0711 (247 aa).

Belongs to the TACO1 family.

It is found in the cytoplasm. This Legionella pneumophila (strain Corby) protein is Probable transcriptional regulatory protein LPC_0711.